The chain runs to 490 residues: Auxin transporter-like protein 5 (490 aa).

The Cytoplasmic portion of the chain corresponds to 1–55 (MEMANDKVAETVIVGNYVEMESEGKPPQDIKSKLSNFLWHGGSAYDAWFSCASNQ). The chain crosses the membrane as a helical span at residues 56–73 (VAQVLLTLPYSFSQLGML). The Extracellular portion of the chain corresponds to 74–75 (SG). Residues 76 to 96 (ILFQLFYGILGSWTAYLISIL) form a helical membrane-spanning segment. Residues 97–132 (YVEYRTRKEREKVNFRSHVIQWFEVLDGLLGKHWRN) are Cytoplasmic-facing. Residues 133-153 (VGLGFNCTFLLFGSVIQLIAC) form a helical membrane-spanning segment. Over 154-168 (ASNIYYINDNLDKRT) the chain is Extracellular. The helical transmembrane segment at 169-189 (WTYIFGACCATTVFIPSFHNY) threads the bilayer. Residue R190 is a topological domain, cytoplasmic. The chain crosses the membrane as a helical span at residues 191–211 (IWSFLGLVMTTYTAWYLTIAA). Residues 212–227 (VLHGQVEGVKHSGPNK) lie on the Extracellular side of the membrane. A helical membrane pass occupies residues 228–248 (IILYFTGATNILYTFGGHAVT). The Cytoplasmic portion of the chain corresponds to 249-262 (VEIMHAMWKPQKFK). Residues 263 to 283 (AIYLLATLYVLTLTIPSATAV) traverse the membrane as a helical segment. The Extracellular portion of the chain corresponds to 284-310 (YWAFGDMLLNHSNAFALLPKSPFRDMA). The N-linked (GlcNAc...) asparagine glycan is linked to N293. The chain crosses the membrane as a helical span at residues 311-331 (VILMLIHQFITFGFACTPLYF). Residues 332–352 (VWEKTVGMHECKSLCKRALVR) lie on the Cytoplasmic side of the membrane. The chain crosses the membrane as a helical span at residues 353 to 373 (LPVVIPIWFLAIIFPFFGPIN). Residues 374–376 (STV) lie on the Extracellular side of the membrane. Residues 377–397 (GSLLVSFTVYIIPALAHIFTF) form a helical membrane-spanning segment. Topologically, residues 398–420 (KSSSARQNAVEQPPKFVGRWVGT) are cytoplasmic. A helical membrane pass occupies residues 421–441 (FVINVFIVVWVLIVGFGFGGW). The Extracellular segment spans residues 442-490 (ASMVNFVHQIDTFGLFTKCYQCPPPTPSVPTMPPHQMNATAPSPHHHHH). N-linked (GlcNAc...) asparagine glycosylation is present at N479.

It belongs to the amino acid/polyamine transporter 2 family. Amino acid/auxin permease (AAAP) (TC 2.A.18.1) subfamily. Shoots and roots of nodulating plants, at low levels.

It localises to the cell membrane. Functionally, carrier protein involved in proton-driven auxin influx. Mediates the formation of auxin gradient from developing leaves (site of auxin biosynthesis) to tips by contributing to the loading of auxin in vascular tissues and facilitating acropetal (base to tip) auxin transport within inner tissues of the root apex, and basipetal (tip to base) auxin transport within outer tissues of the root apex. May be involved in lateral roots and nodules formation. The polypeptide is Auxin transporter-like protein 5 (LAX5) (Medicago truncatula (Barrel medic)).